A 291-amino-acid polypeptide reads, in one-letter code: N-acetylmannosamine kinase (291 aa).

ATP is bound by residues 5-12 and 132-139; these read AIDIGGTK and GVGGGVVS. Residues H156, C166, C168, and C173 each contribute to the Zn(2+) site.

This sequence belongs to the ROK (NagC/XylR) family. NanK subfamily. In terms of assembly, homodimer.

The enzyme catalyses an N-acyl-D-mannosamine + ATP = an N-acyl-D-mannosamine 6-phosphate + ADP + H(+). It participates in amino-sugar metabolism; N-acetylneuraminate degradation; D-fructose 6-phosphate from N-acetylneuraminate: step 2/5. Its function is as follows. Catalyzes the phosphorylation of N-acetylmannosamine (ManNAc) to ManNAc-6-P. This chain is N-acetylmannosamine kinase, found in Escherichia coli (strain K12 / MC4100 / BW2952).